Consider the following 148-residue polypeptide: MKAVIILGLVLLSVTVQGKIFERCELARTLKRLGLDGYRGISLANWVCLAKWESGYNTQATNYNPGDQSTDYGIFQINSHYWCNNGKTPGAVNACHISCNALLQDNIADAVTCAKRVVRDPQGIRAWVAWRNHCQNRDVSQYVQGCGV.

An N-terminal signal peptide occupies residues 1–18 (MKAVIILGLVLLSVTVQG). The C-type lysozyme domain occupies 19–148 (KIFERCELAR…VSQYVQGCGV (130 aa)). 4 disulfides stabilise this stretch: C24–C146, C48–C134, C83–C99, and C95–C113. Residues E53 and D71 contribute to the active site.

This sequence belongs to the glycosyl hydrolase 22 family. In terms of assembly, monomer.

The catalysed reaction is Hydrolysis of (1-&gt;4)-beta-linkages between N-acetylmuramic acid and N-acetyl-D-glucosamine residues in a peptidoglycan and between N-acetyl-D-glucosamine residues in chitodextrins.. Lysozymes have primarily a bacteriolytic function; those in tissues and body fluids are associated with the monocyte-macrophage system and enhance the activity of immunoagents. The protein is Lysozyme C (LYZ) of Erythrocebus patas (Red guenon).